A 332-amino-acid polypeptide reads, in one-letter code: Solute carrier family 25 member 16 (332 aa).

Solcar repeat units follow at residues 34–120, 128–216, and 238–328; these read FYWL…YKTF, SGHV…LKSV, and LKTH…MKQF. The next 6 helical transmembrane spans lie at 37 to 57, 88 to 108, 134 to 154, 191 to 211, 244 to 264, and 299 to 319; these read LRSF…VAPL, GYLG…PYGA, LMAG…LDVV, GLMP…FTFG, LLCG…FDVT, and GLYR…AVAF.

This sequence belongs to the mitochondrial carrier (TC 2.A.29) family.

Its subcellular location is the mitochondrion inner membrane. In terms of biological role, may be involved in the transport of coenzyme A in the mitochondrial matrix. Very little is known about the physiological function of this carrier. The sequence is that of Solute carrier family 25 member 16 from Mus musculus (Mouse).